The chain runs to 278 residues: ATPase SWSAP1 (278 aa).

The segment at 237-278 (SPEKKDSSAGSQSLTLGCDNLPGPGSPLDGILTSETGADSKT) is disordered. Positions 269–278 (TSETGADSKT) are enriched in polar residues.

As to quaternary structure, interacts with ZSWIM7; they form a functional complex involved in homologous recombination repair and stabilize each other. Interacts with RAD51, RAD51B, RAD51C, RAD51D and XRCC3; involved in homologous recombination repair.

It localises to the nucleus. Functionally, ATPase which is preferentially stimulated by single-stranded DNA and is involved in homologous recombination repair (HRR). Has a DNA-binding activity which is independent of its ATPase activity. The chain is ATPase SWSAP1 (Swsap1) from Mus musculus (Mouse).